A 496-amino-acid polypeptide reads, in one-letter code: 7,8-epoxymelianol synthase CYP88A154 (496 aa).

Residues 11–31 (FNFLWLILAIFVGTYVVLFGF) traverse the membrane as a helical segment. Cysteine 444 is a heme binding site.

The protein belongs to the cytochrome P450 family. Requires heme as cofactor.

The protein resides in the membrane. The enzyme catalyses melianol + reduced [NADPH--hemoprotein reductase] + O2 = 7,8-epoxymelianol + oxidized [NADPH--hemoprotein reductase] + H2O + H(+). It functions in the pathway secondary metabolite biosynthesis; terpenoid biosynthesis. Its function is as follows. Monooxygenase involved in the biosynthesis of glabretanes, limonoids and quassinoids triterpene natural products such as ailanthone, chaparrinone, glaucarubinone and amarolide, allelopathic degraded triterpene lactones inhibiting the growth of other plants, and possessing antimalarial, antifeedant, insecticidal, anti-inflammatory and anticancer activities. Catalyzes the epoxidation of melianol to produce 7,8-epoxymelianol. The chain is 7,8-epoxymelianol synthase CYP88A154 from Ailanthus altissima (Tree-of-heaven).